The sequence spans 215 residues: Chaperone protein TorD (215 aa).

The protein belongs to the TorD/DmsD family. TorD subfamily.

The protein localises to the cytoplasm. Involved in the biogenesis of TorA. Acts on TorA before the insertion of the molybdenum cofactor and, as a result, probably favors a conformation of the apoenzyme that is competent for acquiring the cofactor. This chain is Chaperone protein TorD, found in Vibrio parahaemolyticus serotype O3:K6 (strain RIMD 2210633).